We begin with the raw amino-acid sequence, 366 residues long: Ribosomal RNA large subunit methyltransferase M (366 aa).

S-adenosyl-L-methionine is bound by residues serine 188, 221–224 (CPGG), aspartate 240, aspartate 260, and aspartate 277. Lysine 306 (proton acceptor) is an active-site residue.

It belongs to the class I-like SAM-binding methyltransferase superfamily. RNA methyltransferase RlmE family. RlmM subfamily. In terms of assembly, monomer.

It localises to the cytoplasm. The enzyme catalyses cytidine(2498) in 23S rRNA + S-adenosyl-L-methionine = 2'-O-methylcytidine(2498) in 23S rRNA + S-adenosyl-L-homocysteine + H(+). In terms of biological role, catalyzes the 2'-O-methylation at nucleotide C2498 in 23S rRNA. This chain is Ribosomal RNA large subunit methyltransferase M, found in Photorhabdus sp. (strain Az29).